A 212-amino-acid chain; its full sequence is Thaumatin-like protein 1b (212 aa).

7 cysteine pairs are disulfide-bonded: Cys47–Cys57, Cys62–Cys69, Cys117–Cys200, Cys122–Cys183, Cys130–Cys146, Cys150–Cys159, and Cys160–Cys170.

The protein belongs to the thaumatin family.

It is found in the secreted. In Malus domestica (Apple), this protein is Thaumatin-like protein 1b.